Reading from the N-terminus, the 449-residue chain is Phosphoglucosamine mutase (449 aa).

Catalysis depends on S101, which acts as the Phosphoserine intermediate. Mg(2+) contacts are provided by S101, D241, D243, and D245. S101 carries the phosphoserine modification.

Belongs to the phosphohexose mutase family. Requires Mg(2+) as cofactor. Activated by phosphorylation.

The catalysed reaction is alpha-D-glucosamine 1-phosphate = D-glucosamine 6-phosphate. In terms of biological role, catalyzes the conversion of glucosamine-6-phosphate to glucosamine-1-phosphate. The chain is Phosphoglucosamine mutase from Alkaliphilus oremlandii (strain OhILAs) (Clostridium oremlandii (strain OhILAs)).